We begin with the raw amino-acid sequence, 218 residues long: Large ribosomal subunit protein bL25 (218 aa).

Residues 186 to 218 (AVEEEVPAEDEEIMPEPEVIGEEDEGDEEEPEE) form a disordered region.

This sequence belongs to the bacterial ribosomal protein bL25 family. CTC subfamily. In terms of assembly, part of the 50S ribosomal subunit; part of the 5S rRNA/L5/L18/L25 subcomplex. Contacts the 5S rRNA. Binds to the 5S rRNA independently of L5 and L18.

In terms of biological role, this is one of the proteins that binds to the 5S RNA in the ribosome where it forms part of the central protuberance. This is Large ribosomal subunit protein bL25 from Halothermothrix orenii (strain H 168 / OCM 544 / DSM 9562).